The sequence spans 186 residues: FMN reductase (NADPH) (186 aa).

The protein belongs to the SsuE family.

It carries out the reaction FMNH2 + NADP(+) = FMN + NADPH + 2 H(+). In Pseudomonas aeruginosa (strain ATCC 15692 / DSM 22644 / CIP 104116 / JCM 14847 / LMG 12228 / 1C / PRS 101 / PAO1), this protein is FMN reductase (NADPH) (msuE).